Here is a 347-residue protein sequence, read N- to C-terminus: NADH-ubiquinone oxidoreductase chain 2 (347 aa).

10 consecutive transmembrane segments (helical) span residues proline 3–serine 23, histidine 25–methionine 45, tyrosine 59–methionine 79, phenylalanine 111–leucine 131, isoleucine 149–glycine 169, isoleucine 178–proline 198, threonine 201–leucine 221, serine 242–proline 262, asparagine 274–leucine 294, and leucine 325–isoleucine 345.

Belongs to the complex I subunit 2 family. In terms of assembly, core subunit of respiratory chain NADH dehydrogenase (Complex I) which is composed of 45 different subunits. Interacts with TMEM242.

The protein localises to the mitochondrion inner membrane. It carries out the reaction a ubiquinone + NADH + 5 H(+)(in) = a ubiquinol + NAD(+) + 4 H(+)(out). In terms of biological role, core subunit of the mitochondrial membrane respiratory chain NADH dehydrogenase (Complex I) which catalyzes electron transfer from NADH through the respiratory chain, using ubiquinone as an electron acceptor. Essential for the catalytic activity and assembly of complex I. This is NADH-ubiquinone oxidoreductase chain 2 from Rhinoceros unicornis (Greater Indian rhinoceros).